We begin with the raw amino-acid sequence, 344 residues long: uncharacterized protein (344 aa).

The signal sequence occupies residues 1–28; that stretch reads MNKKSLNIVATLGILLVLAFSGCVDQSA.

It belongs to the bacterial solute-binding protein 1 family. WtpA subfamily.

This is an uncharacterized protein from Methanococcus maripaludis (strain C7 / ATCC BAA-1331).